Reading from the N-terminus, the 452-residue chain is MEVVILAAGQGKRMRSVLPKVLQPLAGKPMLSHVLDAARTLAARRICVVYGHGGEVVRERLDAADLAWARQEPQLGTGHAVQQALPHLTDGDLALVLYGDVPLIGVPTLQRLAAAAGDTRLALLTVELDNPTGYGRILRDAAGRVVRIVEEKDASDAERRVREVNTGILVAPVARLRAWLGSLRNDNAQGEYYLTDIIGMAVAEDIEVVTVQPDAVSETLGVNSKPQLAELERIHQRNIAQRLMEDGVTLIDPARIDVRGELVCGRDVEIDVNCVFEGRVELGDGVRIGANCVVRDARIGSGTRVAPFSHIEQTVMGPACVIGPYARTRPGTELGEDVHLGNFVEVKNSVIAAHSKANHLAYVGDADVGQRVNIGAGTITCNYDGANKFRTVIEDDVFIGSDTQLVAPVRVGRGATLGAGTTLTKDAPPEQLTVSRAKQLSIAGWKRPVKQR.

A pyrophosphorylase region spans residues M1 to K225. UDP-N-acetyl-alpha-D-glucosamine-binding positions include L6–G9, K20, Q71, G76–T77, Y98–D100, G135, E150, N165, and N223. D100 lines the Mg(2+) pocket. Residue N223 coordinates Mg(2+). Positions P226–D246 are linker. The tract at residues G247–R452 is N-acetyltransferase. UDP-N-acetyl-alpha-D-glucosamine contacts are provided by R329 and K347. Catalysis depends on H359, which acts as the Proton acceptor. UDP-N-acetyl-alpha-D-glucosamine-binding residues include Y362 and N373. Acetyl-CoA is bound by residues A376, N382–Y383, S401, A419, and R436.

In the N-terminal section; belongs to the N-acetylglucosamine-1-phosphate uridyltransferase family. This sequence in the C-terminal section; belongs to the transferase hexapeptide repeat family. In terms of assembly, homotrimer. Requires Mg(2+) as cofactor.

Its subcellular location is the cytoplasm. The catalysed reaction is alpha-D-glucosamine 1-phosphate + acetyl-CoA = N-acetyl-alpha-D-glucosamine 1-phosphate + CoA + H(+). It catalyses the reaction N-acetyl-alpha-D-glucosamine 1-phosphate + UTP + H(+) = UDP-N-acetyl-alpha-D-glucosamine + diphosphate. It participates in nucleotide-sugar biosynthesis; UDP-N-acetyl-alpha-D-glucosamine biosynthesis; N-acetyl-alpha-D-glucosamine 1-phosphate from alpha-D-glucosamine 6-phosphate (route II): step 2/2. The protein operates within nucleotide-sugar biosynthesis; UDP-N-acetyl-alpha-D-glucosamine biosynthesis; UDP-N-acetyl-alpha-D-glucosamine from N-acetyl-alpha-D-glucosamine 1-phosphate: step 1/1. It functions in the pathway bacterial outer membrane biogenesis; LPS lipid A biosynthesis. Its function is as follows. Catalyzes the last two sequential reactions in the de novo biosynthetic pathway for UDP-N-acetylglucosamine (UDP-GlcNAc). The C-terminal domain catalyzes the transfer of acetyl group from acetyl coenzyme A to glucosamine-1-phosphate (GlcN-1-P) to produce N-acetylglucosamine-1-phosphate (GlcNAc-1-P), which is converted into UDP-GlcNAc by the transfer of uridine 5-monophosphate (from uridine 5-triphosphate), a reaction catalyzed by the N-terminal domain. The polypeptide is Bifunctional protein GlmU (Azoarcus sp. (strain BH72)).